The primary structure comprises 151 residues: Probable cGMP 3',5'-cyclic phosphodiesterase subunit delta (151 aa).

This sequence belongs to the PDE6D/unc-119 family. Interacts with Pde6.

It is found in the nucleus. It localises to the cytoplasm. The polypeptide is Probable cGMP 3',5'-cyclic phosphodiesterase subunit delta (Drosophila grimshawi (Hawaiian fruit fly)).